Reading from the N-terminus, the 1190-residue chain is Phosphatidylinositol 3,4,5-trisphosphate 5-phosphatase 1 (1190 aa).

The 97-residue stretch at 8-104 (WNHGNITRSK…GLVTHLQFPV (97 aa)) folds into the SH2 domain. Residues 111 to 120 (AIDEPEEDTE) show a composition bias toward acidic residues. The disordered stretch occupies residues 111–130 (AIDEPEEDTESVMSPPELPP). Residues 126–131 (PELPPR) carry the SH3-binding 1 motif. Residue S245 is modified to Phosphoserine. The NPXY motif 1 signature appears at 914-917 (NPNY). Y917 is subject to Phosphotyrosine. S934 is modified (phosphoserine). Y944 carries the phosphotyrosine modification. Residues 946–1190 (QLPKDSSLGP…ESLLGRTAMQ (245 aa)) are disordered. Over residues 961-971 (PPTPPSQPPLS) the composition is skewed to pro residues. T963 is subject to Phosphothreonine. Phosphoserine is present on residues S966 and S971. The SH3-binding 2 motif lies at 969 to 974 (PLSPKK). The segment covering 989–998 (QETRPGDLGK) has biased composition (basic and acidic residues). The interaction with DAB2 stretch occupies residues 1014–1028 (MFENPLYGSVSPFPK). The short motif at 1017–1020 (NPLY) is the NPXY motif 2 element. Y1020 carries the post-translational modification Phosphotyrosine. The segment covering 1031–1045 (PRKEQESPKMMRKEP) has biased composition (basic and acidic residues). Positions 1038–1049 (PKMMRKEPPPCP) match the SH3-binding 3 motif. The span at 1140–1149 (IPAPRPPLPV) shows a compositional bias: pro residues. Residues 1161–1183 (KGRDYRDNTELPHHGKHRQEESL) show a composition bias toward basic and acidic residues.

It belongs to the inositol 1,4,5-trisphosphate 5-phosphatase family. Interacts with tyrosine phosphorylated forms of SHC1. Interacts with tyrosine phosphorylated form of DOK1. Interacts with tyrosine phosphorylated form of DOK3. Interacts with tyrosine phosphorylated form of SLAMF1/CD150. Interacts with PTPN11/SHP-2 in response to IL-3. Interacts with receptor EPOR. Interacts with receptors MS4A2/FCER1B and FCER1G. Interacts with receptors FCGR2B and FCGR3. Interacts with receptor FCGR2A, leading to regulate gene expression during the phagocytic process. Interacts with GRB2. Interacts with PLCG1. Interacts with tyrosine kinases SRC and TEC. Interacts with c-Met/MET. Interacts with MILR1 (tyrosine-phosphorylated). Can weakly interact (via NPXY motif 2) with DAB2 (via PID domain); the interaction is impaired by tyrosine phosphorylation of the NPXY motif. Interacts (via SH2 domain) with tyrosine phosphorylated KLRC1 (via ITIM). Interacts with MPL/TPOR. Post-translationally, tyrosine phosphorylated by the members of the SRC family after exposure to a diverse array of extracellular stimuli such as cytokines, growth factors, antibodies, chemokines, integrin ligands and hypertonic and oxidative stress. Phosphorylated upon IgG receptor FCGR2B-binding.

It localises to the cytoplasm. It is found in the cell membrane. Its subcellular location is the membrane raft. The protein localises to the cytoskeleton. The enzyme catalyses a 1,2-diacyl-sn-glycero-3-phospho-(1D-myo-inositol-3,4,5-trisphosphate) + H2O = a 1,2-diacyl-sn-glycero-3-phospho-(1D-myo-inositol-3,4-bisphosphate) + phosphate. It carries out the reaction 1D-myo-inositol 1,3,4,5-tetrakisphosphate + H2O = 1D-myo-inositol 1,3,4-trisphosphate + phosphate. The catalysed reaction is a 1,2-diacyl-sn-glycero-3-phospho-(1D-myo-inositol-4,5-bisphosphate) + H2O = a 1,2-diacyl-sn-glycero-3-phospho-(1D-myo-inositol 4-phosphate) + phosphate. Activated upon translocation to the sites of synthesis of PtdIns(3,4,5)P3 in the membrane. In terms of biological role, phosphatidylinositol (PtdIns) phosphatase that specifically hydrolyzes the 5-phosphate of phosphatidylinositol-3,4,5-trisphosphate (PtdIns(3,4,5)P3) to produce PtdIns(3,4)P2, thereby negatively regulating the PI3K (phosphoinositide 3-kinase) pathways. Also able to hydrolyze the 5-phosphate of phosphatidylinositol-4,5-bisphosphate (PtdIns(4,5)P3) and inositol 1,3,4,5-tetrakisphosphate. Acts as a negative regulator of B-cell antigen receptor signaling. Mediates signaling from the FC-gamma-RIIB receptor (FCGR2B), playing a central role in terminating signal transduction from activating immune/hematopoietic cell receptor systems. Acts as a negative regulator of myeloid cell proliferation/survival and chemotaxis, mast cell degranulation, immune cells homeostasis, integrin alpha-IIb/beta-3 signaling in platelets and JNK signaling in B-cells. Regulates proliferation of osteoclast precursors, macrophage programming, phagocytosis and activation and is required for endotoxin tolerance. Involved in the control of cell-cell junctions, CD32a signaling in neutrophils and modulation of EGF-induced phospholipase C activity. Key regulator of neutrophil migration, by governing the formation of the leading edge and polarization required for chemotaxis. Modulates FCGR3/CD16-mediated cytotoxicity in NK cells. Mediates the activin/TGF-beta-induced apoptosis through its Smad-dependent expression. This chain is Phosphatidylinositol 3,4,5-trisphosphate 5-phosphatase 1 (Inpp5d), found in Rattus norvegicus (Rat).